A 188-amino-acid polypeptide reads, in one-letter code: Cytochrome b561 homolog 2 (188 aa).

The Cytoplasmic portion of the chain corresponds to 1 to 15 (MSFTNTPERYGVISA). The helical transmembrane segment at 16-36 (AFHWLSAIIVYGMFALGLWMV) threads the bilayer. His18 and His52 together coordinate heme b. Topologically, residues 37–54 (TLSYYDGWYHKAPELHKS) are periplasmic. Residues 55-75 (IGILLMMGLVIRVLWRVISPP) traverse the membrane as a helical segment. Residues 76–91 (PGPLPSYSPMTRLAAR) are Cytoplasmic-facing. Residues 92–112 (AGHLALYLLLFAIGISGYLIS) form a helical membrane-spanning segment. The Periplasmic segment spans residues 113–143 (TADGKPISVFGWFDVPATLADAGAQADFAGA). Residues 144–164 (LHFWLAWSVVVLSVMHGFMAL) traverse the membrane as a helical segment. The heme b site is built by His145 and His159. The Cytoplasmic segment spans residues 165-188 (KHHFIDKDDTLKRMLGKSSSDYGV).

Belongs to the cytochrome b561 family. The cofactor is heme b.

Its subcellular location is the cell inner membrane. This chain is Cytochrome b561 homolog 2 (yceJ), found in Escherichia coli (strain K12).